The sequence spans 73 residues: Beta-defensin 50 (73 aa).

Positions 1–23 (MKTLHLLLLISGLLSVFVKGVGS) are cleaved as a signal peptide. Cystine bridges form between Cys-34/Cys-63 and Cys-46/Cys-64.

It belongs to the beta-defensin family.

The protein localises to the secreted. Functionally, has bactericidal activity. The polypeptide is Beta-defensin 50 (Defb50) (Rattus norvegicus (Rat)).